Consider the following 218-residue polypeptide: Thiopurine S-methyltransferase (218 aa).

4 residues coordinate S-adenosyl-L-methionine: tryptophan 10, leucine 45, glutamate 66, and arginine 123.

It belongs to the class I-like SAM-binding methyltransferase superfamily. TPMT family.

The protein localises to the cytoplasm. It catalyses the reaction S-adenosyl-L-methionine + a thiopurine = S-adenosyl-L-homocysteine + a thiopurine S-methylether.. Involved in the biological cycling of tellurium and selenium. Tellurium resistance (Ter) mechanism. The chain is Thiopurine S-methyltransferase from Pseudomonas syringae pv. pisi.